Consider the following 225-residue polypeptide: MSLIEFPLLDQTSSNSVISTTPNDLSNWSRLSSLWPLLYGTSCCFIEFASLIGSRFDFDRYGLVPRSSPRQADLILTAGTVTMKMAPSLVRLYEQMPEPKYVIAMGACTITGGMFSTDSYSTVRGVDKLIPVDVYLPGCPPKPEAVIDALTKLRKKISREIVEDRIRSQNKNRCFTTSHKLYVRRSTHTGTYEQELLYQSPSTLDISSENFYKSKSIVPSYKLVN.

[4Fe-4S] cluster-binding residues include C43, C44, C108, and C139.

The protein belongs to the complex I 20 kDa subunit family. As to quaternary structure, NDH is composed of at least 16 different subunits, 5 of which are encoded in the nucleus. [4Fe-4S] cluster serves as cofactor.

Its subcellular location is the plastid. The protein resides in the chloroplast thylakoid membrane. The enzyme catalyses a plastoquinone + NADH + (n+1) H(+)(in) = a plastoquinol + NAD(+) + n H(+)(out). The catalysed reaction is a plastoquinone + NADPH + (n+1) H(+)(in) = a plastoquinol + NADP(+) + n H(+)(out). NDH shuttles electrons from NAD(P)H:plastoquinone, via FMN and iron-sulfur (Fe-S) centers, to quinones in the photosynthetic chain and possibly in a chloroplast respiratory chain. The immediate electron acceptor for the enzyme in this species is believed to be plastoquinone. Couples the redox reaction to proton translocation, and thus conserves the redox energy in a proton gradient. The chain is NAD(P)H-quinone oxidoreductase subunit K, chloroplastic from Brachypodium distachyon (Purple false brome).